Here is a 123-residue protein sequence, read N- to C-terminus: MPTINQLIRKGREKQLKRKKTPALQACPQRRGVCTRVYTTTPKKPNSALRKVARVRLTNAIEVTAYIGGEGHNLQEHSVVLIRGGRVKDLPGVRYHIVRGSLDTAGVADRRQGRSKYGAKRPK.

At D89 the chain carries 3-methylthioaspartic acid.

Belongs to the universal ribosomal protein uS12 family. As to quaternary structure, part of the 30S ribosomal subunit. Contacts proteins S8 and S17. May interact with IF1 in the 30S initiation complex.

Its function is as follows. With S4 and S5 plays an important role in translational accuracy. Interacts with and stabilizes bases of the 16S rRNA that are involved in tRNA selection in the A site and with the mRNA backbone. Located at the interface of the 30S and 50S subunits, it traverses the body of the 30S subunit contacting proteins on the other side and probably holding the rRNA structure together. The combined cluster of proteins S8, S12 and S17 appears to hold together the shoulder and platform of the 30S subunit. The sequence is that of Small ribosomal subunit protein uS12 from Maridesulfovibrio salexigens (strain ATCC 14822 / DSM 2638 / NCIMB 8403 / VKM B-1763) (Desulfovibrio salexigens).